The sequence spans 271 residues: Zinc finger protein 501 (271 aa).

9 consecutive C2H2-type zinc fingers follow at residues serine 22–histidine 44, tyrosine 50–histidine 72, tyrosine 78–histidine 100, tyrosine 106–histidine 128, tyrosine 134–histidine 156, phenylalanine 162–histidine 184, tyrosine 190–histidine 212, tyrosine 218–histidine 240, and tyrosine 246–histidine 268.

Belongs to the krueppel C2H2-type zinc-finger protein family.

The protein localises to the nucleus. It localises to the nucleolus. In terms of biological role, may be involved in transcriptional regulation. Essential for Golgi structural integrity. The chain is Zinc finger protein 501 (ZNF501) from Pongo abelii (Sumatran orangutan).